A 90-amino-acid chain; its full sequence is Small ribosomal subunit protein uS15 (90 aa).

It belongs to the universal ribosomal protein uS15 family. As to quaternary structure, part of the 30S ribosomal subunit. Forms a bridge to the 50S subunit in the 70S ribosome, contacting the 23S rRNA.

In terms of biological role, one of the primary rRNA binding proteins, it binds directly to 16S rRNA where it helps nucleate assembly of the platform of the 30S subunit by binding and bridging several RNA helices of the 16S rRNA. Forms an intersubunit bridge (bridge B4) with the 23S rRNA of the 50S subunit in the ribosome. In Blochmanniella floridana, this protein is Small ribosomal subunit protein uS15.